A 348-amino-acid polypeptide reads, in one-letter code: GTPase Obg (348 aa).

The Obg domain maps to 1 to 159 (MKFLDLAKVY…RTIWLRLKLI (159 aa)). The OBG-type G domain maps to 160–327 (ADAGLLGLPN…VLRAVRAEID (168 aa)). GTP-binding positions include 166-173 (GLPNAGKS), 191-195 (FTTLH), 212-215 (DIPG), 279-282 (NKID), and 308-310 (SSV). The Mg(2+) site is built by Ser-173 and Thr-193.

It belongs to the TRAFAC class OBG-HflX-like GTPase superfamily. OBG GTPase family. In terms of assembly, monomer. The cofactor is Mg(2+).

The protein localises to the cytoplasm. In terms of biological role, an essential GTPase which binds GTP, GDP and possibly (p)ppGpp with moderate affinity, with high nucleotide exchange rates and a fairly low GTP hydrolysis rate. Plays a role in control of the cell cycle, stress response, ribosome biogenesis and in those bacteria that undergo differentiation, in morphogenesis control. In Ruegeria sp. (strain TM1040) (Silicibacter sp.), this protein is GTPase Obg.